The following is a 394-amino-acid chain: Phosphoglycerate kinase (394 aa).

Substrate-binding positions include 21–23 (DFN), Arg-36, 59–62 (HLGR), Arg-118, and Arg-151. Ser-183 bears the Phosphoserine mark. Lys-201 and Gly-292 together coordinate ATP. At Thr-299 the chain carries Phosphothreonine. ATP contacts are provided by residues Glu-323 and 350-353 (GGDS).

Belongs to the phosphoglycerate kinase family. Monomer.

It localises to the cytoplasm. The enzyme catalyses (2R)-3-phosphoglycerate + ATP = (2R)-3-phospho-glyceroyl phosphate + ADP. It functions in the pathway carbohydrate degradation; glycolysis; pyruvate from D-glyceraldehyde 3-phosphate: step 2/5. This chain is Phosphoglycerate kinase, found in Bacillus thuringiensis (strain Al Hakam).